The chain runs to 592 residues: Nucleolar protein 58 (592 aa).

The Nop domain occupies 285–410; that stretch reads IAPNLTALVG…LERKLAAMEG (126 aa). Positions 443–592 are disordered; it reads DADALSSDEP…QKKKKKKGEE (150 aa). Basic and acidic residues predominate over residues 450 to 462; it reads DEPKSKKDKKLIE. Acidic residues predominate over residues 463–478; that stretch reads EVSDEEMADADSDEEP. Composition is skewed to basic and acidic residues over residues 505-515 and 557-571; these read GKDAELEKLAE and KKAS…KRSD. Positions 582–592 are enriched in basic residues; sequence KQKKKKKKGEE.

The protein belongs to the NOP5/NOP56 family.

The protein localises to the nucleus. Its subcellular location is the nucleolus. Required for pre-18S rRNA processing. May bind microtubules. This Aspergillus clavatus (strain ATCC 1007 / CBS 513.65 / DSM 816 / NCTC 3887 / NRRL 1 / QM 1276 / 107) protein is Nucleolar protein 58 (nop58).